The following is a 271-amino-acid chain: Putative pyruvate, phosphate dikinase regulatory protein 1 (271 aa).

Residue Gly156 to Thr163 coordinates ADP.

It belongs to the pyruvate, phosphate/water dikinase regulatory protein family. PDRP subfamily.

It carries out the reaction N(tele)-phospho-L-histidyl/L-threonyl-[pyruvate, phosphate dikinase] + ADP = N(tele)-phospho-L-histidyl/O-phospho-L-threonyl-[pyruvate, phosphate dikinase] + AMP + H(+). The enzyme catalyses N(tele)-phospho-L-histidyl/O-phospho-L-threonyl-[pyruvate, phosphate dikinase] + phosphate + H(+) = N(tele)-phospho-L-histidyl/L-threonyl-[pyruvate, phosphate dikinase] + diphosphate. Bifunctional serine/threonine kinase and phosphorylase involved in the regulation of the pyruvate, phosphate dikinase (PPDK) by catalyzing its phosphorylation/dephosphorylation. This chain is Putative pyruvate, phosphate dikinase regulatory protein 1, found in Staphylococcus saprophyticus subsp. saprophyticus (strain ATCC 15305 / DSM 20229 / NCIMB 8711 / NCTC 7292 / S-41).